Consider the following 416-residue polypeptide: 4-hydroxy-3-methylbut-2-en-1-yl diphosphate synthase (flavodoxin) (416 aa).

Residues Cys304, Cys307, Cys350, and Glu357 each coordinate [4Fe-4S] cluster.

Belongs to the IspG family. It depends on [4Fe-4S] cluster as a cofactor.

It catalyses the reaction (2E)-4-hydroxy-3-methylbut-2-enyl diphosphate + oxidized [flavodoxin] + H2O + 2 H(+) = 2-C-methyl-D-erythritol 2,4-cyclic diphosphate + reduced [flavodoxin]. Its pathway is isoprenoid biosynthesis; isopentenyl diphosphate biosynthesis via DXP pathway; isopentenyl diphosphate from 1-deoxy-D-xylulose 5-phosphate: step 5/6. Converts 2C-methyl-D-erythritol 2,4-cyclodiphosphate (ME-2,4cPP) into 1-hydroxy-2-methyl-2-(E)-butenyl 4-diphosphate. This Rhizobium etli (strain CIAT 652) protein is 4-hydroxy-3-methylbut-2-en-1-yl diphosphate synthase (flavodoxin).